Here is a 345-residue protein sequence, read N- to C-terminus: N(4)-(Beta-N-acetylglucosaminyl)-L-asparaginase (345 aa).

The signal sequence occupies residues Met1–Gly23. The N-linked (GlcNAc...) asparagine glycan is linked to Asn38. Cys64 and Cys69 are oxidised to a cystine. An N-linked (GlcNAc...) asparagine glycan is attached at Asn149. Cys163 and Cys179 are disulfide-bonded. Thr205 functions as the Nucleophile in the catalytic mechanism. Substrate contacts are provided by residues Arg233 to Asp236 and Thr256 to Gly259. A disulfide bridge connects residues Cys285 and Cys305. Asn307 carries an N-linked (GlcNAc...) asparagine glycan. A disulfide bond links Cys316 and Cys344.

Belongs to the Ntn-hydrolase family. In terms of assembly, heterotetramer of two alpha and two beta chains arranged as a dimer of alpha/beta heterodimers. N-glycosylated. Post-translationally, cleaved into an alpha and beta chain by autocatalysis; this activates the enzyme. The N-terminal residue of the beta subunit is responsible for the nucleophile hydrolase activity.

It localises to the lysosome. The enzyme catalyses N(4)-(beta-N-acetyl-D-glucosaminyl)-L-asparagine + H2O = N-acetyl-beta-D-glucosaminylamine + L-aspartate + H(+). Cleaves the GlcNAc-Asn bond which joins oligosaccharides to the peptide of asparagine-linked glycoproteins. The chain is N(4)-(Beta-N-acetylglucosaminyl)-L-asparaginase (Aga) from Rattus norvegicus (Rat).